Consider the following 581-residue polypeptide: Proline--tRNA ligase (581 aa).

The protein belongs to the class-II aminoacyl-tRNA synthetase family. ProS type 1 subfamily. Homodimer.

It localises to the cytoplasm. It carries out the reaction tRNA(Pro) + L-proline + ATP = L-prolyl-tRNA(Pro) + AMP + diphosphate. Functionally, catalyzes the attachment of proline to tRNA(Pro) in a two-step reaction: proline is first activated by ATP to form Pro-AMP and then transferred to the acceptor end of tRNA(Pro). As ProRS can inadvertently accommodate and process non-cognate amino acids such as alanine and cysteine, to avoid such errors it has two additional distinct editing activities against alanine. One activity is designated as 'pretransfer' editing and involves the tRNA(Pro)-independent hydrolysis of activated Ala-AMP. The other activity is designated 'posttransfer' editing and involves deacylation of mischarged Ala-tRNA(Pro). The misacylated Cys-tRNA(Pro) is not edited by ProRS. The protein is Proline--tRNA ligase of Chlamydia trachomatis serovar A (strain ATCC VR-571B / DSM 19440 / HAR-13).